The chain runs to 522 residues: Cytochrome P450 4F4 (522 aa).

The next 2 helical transmembrane spans lie at 15-35 (TSLP…VRVL) and 87-107 (GFMT…PDVI). Residues Glu-328 and Cys-468 each contribute to the heme site.

The protein belongs to the cytochrome P450 family. It depends on heme as a cofactor. In terms of tissue distribution, expressed in hepatocytes. High expression in liver and kidney. Lower expression in brain.

The protein resides in the endoplasmic reticulum membrane. Its subcellular location is the microsome membrane. The enzyme catalyses (5Z,8Z,11Z,14Z)-eicosatetraenoate + reduced [NADPH--hemoprotein reductase] + O2 = 20-hydroxy-(5Z,8Z,11Z,14Z)-eicosatetraenoate + oxidized [NADPH--hemoprotein reductase] + H2O + H(+). The catalysed reaction is leukotriene B4 + reduced [NADPH--hemoprotein reductase] + O2 = 20-hydroxy-leukotriene B4 + oxidized [NADPH--hemoprotein reductase] + H2O + H(+). It catalyses the reaction 6-trans-leukotriene B4 + reduced [NADPH--hemoprotein reductase] + O2 = 20-hydroxy-6-trans-leukotriene B4 + oxidized [NADPH--hemoprotein reductase] + H2O + H(+). It carries out the reaction prostaglandin A1 + reduced [NADPH--hemoprotein reductase] + O2 = 20-hydroxy prostaglandin A1 + oxidized [NADPH--hemoprotein reductase] + H2O + H(+). The enzyme catalyses prostaglandin E1 + reduced [NADPH--hemoprotein reductase] + O2 = 20-hydroxy prostaglandin E1 + oxidized [NADPH--hemoprotein reductase] + H2O + H(+). Its function is as follows. A cytochrome P450 monooxygenase involved in the metabolism of arachidonic acid and its oxygenated derivatives. Mechanistically, uses molecular oxygen inserting one oxygen atom into a substrate, and reducing the second into a water molecule, with two electrons provided by NADPH via cytochrome P450 reductase (CPR; NADPH-ferrihemoprotein reductase). Participates in the conversion of arachidonic acid to omega-hydroxyeicosatetraenoic acid (20-HETE), a signaling molecule acting both as vasoconstrictive and natriuretic with overall effect on arterial blood pressure. Hydroxylates the terminal carbon (omega-hydroxylation) of inflammatory lipid mediators, including prostaglandin (PG) A1, PGE1 and leukotriene B4 (LTB4), and may play a role in inactivation of these oxylipins during the resolution of inflammation. This is Cytochrome P450 4F4 from Rattus norvegicus (Rat).